The following is a 483-amino-acid chain: Altronate oxidoreductase (483 aa).

Residue 18-29 (IIQFGEGNFLRA) participates in NAD(+) binding.

It belongs to the mannitol dehydrogenase family. UxaB subfamily.

The enzyme catalyses D-altronate + NAD(+) = keto-D-tagaturonate + NADH + H(+). It functions in the pathway carbohydrate metabolism; pentose and glucuronate interconversion. The chain is Altronate oxidoreductase from Escherichia coli O1:K1 / APEC.